Reading from the N-terminus, the 426-residue chain is 4-hydroxy-3-methylbut-2-en-1-yl diphosphate synthase (flavodoxin) (426 aa).

[4Fe-4S] cluster-binding residues include C310, C313, C356, and E363.

It belongs to the IspG family. Requires [4Fe-4S] cluster as cofactor.

It carries out the reaction (2E)-4-hydroxy-3-methylbut-2-enyl diphosphate + oxidized [flavodoxin] + H2O + 2 H(+) = 2-C-methyl-D-erythritol 2,4-cyclic diphosphate + reduced [flavodoxin]. The protein operates within isoprenoid biosynthesis; isopentenyl diphosphate biosynthesis via DXP pathway; isopentenyl diphosphate from 1-deoxy-D-xylulose 5-phosphate: step 5/6. Converts 2C-methyl-D-erythritol 2,4-cyclodiphosphate (ME-2,4cPP) into 1-hydroxy-2-methyl-2-(E)-butenyl 4-diphosphate. This chain is 4-hydroxy-3-methylbut-2-en-1-yl diphosphate synthase (flavodoxin), found in Rhodopseudomonas palustris (strain BisA53).